The chain runs to 217 residues: Ras-related protein Rab11B (217 aa).

21–28 (GDSGVGKS) lines the GTP pocket. Positions 43–51 (SKSTIGVEF) match the Effector region motif. Residues 69-73 (DTAGQ) and 127-130 (NKAD) contribute to the GTP site. 2 S-geranylgeranyl cysteine lipidation sites follow: Cys-214 and Cys-215.

The protein belongs to the small GTPase superfamily. Rab family.

It localises to the cell membrane. The sequence is that of Ras-related protein Rab11B (RAB11B) from Nicotiana tabacum (Common tobacco).